A 215-amino-acid polypeptide reads, in one-letter code: Pyridoxine/pyridoxamine 5'-phosphate oxidase (215 aa).

Residues 9 to 12 and Lys-69 contribute to the substrate site; that span reads RRDY. Residues 64-69, 79-80, Lys-86, and Gln-108 contribute to the FMN site; these read RVLLLK and FT. Substrate-binding residues include Tyr-126, Arg-130, and Ser-134. FMN is bound by residues 143–144 and Trp-188; that span reads QS. Position 194-196 (194-196) interacts with substrate; sequence RLH. Arg-198 contacts FMN.

It belongs to the pyridoxamine 5'-phosphate oxidase family. As to quaternary structure, homodimer. It depends on FMN as a cofactor.

It catalyses the reaction pyridoxamine 5'-phosphate + O2 + H2O = pyridoxal 5'-phosphate + H2O2 + NH4(+). The catalysed reaction is pyridoxine 5'-phosphate + O2 = pyridoxal 5'-phosphate + H2O2. Its pathway is cofactor metabolism; pyridoxal 5'-phosphate salvage; pyridoxal 5'-phosphate from pyridoxamine 5'-phosphate: step 1/1. It participates in cofactor metabolism; pyridoxal 5'-phosphate salvage; pyridoxal 5'-phosphate from pyridoxine 5'-phosphate: step 1/1. In terms of biological role, catalyzes the oxidation of either pyridoxine 5'-phosphate (PNP) or pyridoxamine 5'-phosphate (PMP) into pyridoxal 5'-phosphate (PLP). This Pseudomonas syringae pv. syringae (strain B728a) protein is Pyridoxine/pyridoxamine 5'-phosphate oxidase.